Consider the following 225-residue polypeptide: Class E basic helix-loop-helix protein 23 (225 aa).

The interval 35–104 is disordered; the sequence is EAARGYGTPG…PREQRSLRLS (70 aa). Residues 100–154 enclose the bHLH domain; the sequence is SLRLSINARERRRMHDLNDALDGLRAVIPYAHSPSVRKLSKIATLLLAKNYILMQ.

Its subcellular location is the nucleus. Its function is as follows. May function as transcriptional repressor. May modulate the expression of genes required for the differentiation and/or maintenance of pancreatic and neuronal cell types. May be important for rod bipolar cell maturation. The protein is Class E basic helix-loop-helix protein 23 (BHLHE23) of Homo sapiens (Human).